The chain runs to 147 residues: MGLPAQLPVTLLCLLAGTAHFIQGRRGDIILPEVIKTLNILTERKTPCTKLMIADALAVPKNTTEREAVCRAATALRQFYLHHKVSWCFKEHGELGDLRLLRGLDRNLCSMAKLSNCPGKEARQTTLEDFLDRLKTAMQEKYSKRQS.

A signal peptide spans 1 to 24; it reads MGLPAQLPVTLLCLLAGTAHFIQG. Cys-48 and Cys-88 form a disulfide bridge. Residue Asn-62 is glycosylated (N-linked (GlcNAc...) asparagine).

The protein belongs to the IL-4/IL-13 family.

The protein resides in the secreted. Its function is as follows. Participates in at least several B-cell activation processes as well as of other cell types. It is a costimulator of DNA-synthesis. It induces the expression of class II MHC molecules on resting B-cells. It enhances both secretion and cell surface expression of IgE and IgG1. It also regulates the expression of the low affinity Fc receptor for IgE (CD23) on both lymphocytes and monocytes. Positively regulates IL31RA expression in macrophages. Stimulates autophagy in dendritic cells by interfering with mTORC1 signaling and through the induction of RUFY4. The sequence is that of Interleukin-4 (IL4) from Oryctolagus cuniculus (Rabbit).